The following is a 169-amino-acid chain: NAD(P)H-quinone oxidoreductase subunit J, chloroplastic (169 aa).

This sequence belongs to the complex I 30 kDa subunit family. As to quaternary structure, NDH is composed of at least 16 different subunits, 5 of which are encoded in the nucleus.

The protein resides in the plastid. It localises to the chloroplast thylakoid membrane. The catalysed reaction is a plastoquinone + NADH + (n+1) H(+)(in) = a plastoquinol + NAD(+) + n H(+)(out). It catalyses the reaction a plastoquinone + NADPH + (n+1) H(+)(in) = a plastoquinol + NADP(+) + n H(+)(out). Functionally, NDH shuttles electrons from NAD(P)H:plastoquinone, via FMN and iron-sulfur (Fe-S) centers, to quinones in the photosynthetic chain and possibly in a chloroplast respiratory chain. The immediate electron acceptor for the enzyme in this species is believed to be plastoquinone. Couples the redox reaction to proton translocation, and thus conserves the redox energy in a proton gradient. The chain is NAD(P)H-quinone oxidoreductase subunit J, chloroplastic from Marchantia polymorpha (Common liverwort).